The following is a 503-amino-acid chain: ATP synthase subunit alpha (503 aa).

Residue 170–177 coordinates ATP; it reads GDRKTGKT.

Belongs to the ATPase alpha/beta chains family. F-type ATPases have 2 components, CF(1) - the catalytic core - and CF(0) - the membrane proton channel. CF(1) has five subunits: alpha(3), beta(3), gamma(1), delta(1), epsilon(1). CF(0) has four main subunits: a(1), b(1), b'(1) and c(9-12).

Its subcellular location is the cellular thylakoid membrane. It carries out the reaction ATP + H2O + 4 H(+)(in) = ADP + phosphate + 5 H(+)(out). Produces ATP from ADP in the presence of a proton gradient across the membrane. The alpha chain is a regulatory subunit. The protein is ATP synthase subunit alpha of Synechocystis sp. (strain ATCC 27184 / PCC 6803 / Kazusa).